The primary structure comprises 575 residues: Guanine nucleotide-binding protein-like 3-like protein (575 aa).

A compositionally biased stretch (basic residues) spans Met-1–Ala-30. Residues Met-1 to Arg-75 are disordered. A required for nucleolar localization region spans residues Lys-9–Lys-28. Over residues Ser-42–Arg-72 the composition is skewed to basic and acidic residues. Residues Glu-51–Glu-79 adopt a coiled-coil conformation. The CP-type G domain maps to Tyr-118–Gly-303. GTP is bound by residues Asn-166–Asp-169, Gly-252–Ser-259, and Asp-296–Gly-299. A Glycyl lysine isopeptide (Lys-Gly) (interchain with G-Cter in SUMO1) cross-link involves residue Lys-470.

This sequence belongs to the TRAFAC class YlqF/YawG GTPase family. In terms of assembly, interacts with MDM2; this interaction, which occurs in the nucleoplasm, stabilizes MDM2. Indirectly interacts with TP53, via MDM2-binding. Interacts with TERF1; this interaction probably occurs in the nucleoplasm and is increased during mitosis, when the nucleolus is disassembled. This binding may promote TERF1 homodimerization. Interacts with TERT.

Its subcellular location is the nucleus. The protein localises to the nucleolus. Functionally, stabilizes TERF1 telomeric association by preventing TERF1 recruitment by PML. Stabilizes TERF1 protein by preventing its ubiquitination and hence proteasomal degradation. Does so by interfering with TERF1-binding to FBXO4 E3 ubiquitin-protein ligase. Required for cell proliferation. By stabilizing TRF1 protein during mitosis, promotes metaphase-to-anaphase transition. Stabilizes MDM2 protein by preventing its ubiquitination, and hence proteasomal degradation. By acting on MDM2, may affect TP53 activity. Required for normal processing of ribosomal pre-rRNA. Binds GTP. This chain is Guanine nucleotide-binding protein-like 3-like protein (GNL3L), found in Bos taurus (Bovine).